The primary structure comprises 348 residues: Ketol-acid reductoisomerase (NADP(+)) (348 aa).

Residues 2–182 (AKTYYDHDAD…GCTRAGVLET (181 aa)) form the KARI N-terminal Rossmann domain. NADP(+) contacts are provided by residues 25 to 28 (YGSQ), Ser-51, Ser-53, and 83 to 86 (DTAQ). Residue His-108 is part of the active site. Gly-134 contacts NADP(+). The region spanning 183-328 (TFKEETETDL…EKLRAAMPFL (146 aa)) is the KARI C-terminal knotted domain. The Mg(2+) site is built by Asp-191, Glu-195, Glu-227, and Glu-231. Ser-252 provides a ligand contact to substrate.

It belongs to the ketol-acid reductoisomerase family. Requires Mg(2+) as cofactor.

The catalysed reaction is (2R)-2,3-dihydroxy-3-methylbutanoate + NADP(+) = (2S)-2-acetolactate + NADPH + H(+). It catalyses the reaction (2R,3R)-2,3-dihydroxy-3-methylpentanoate + NADP(+) = (S)-2-ethyl-2-hydroxy-3-oxobutanoate + NADPH + H(+). The protein operates within amino-acid biosynthesis; L-isoleucine biosynthesis; L-isoleucine from 2-oxobutanoate: step 2/4. Its pathway is amino-acid biosynthesis; L-valine biosynthesis; L-valine from pyruvate: step 2/4. Its function is as follows. Involved in the biosynthesis of branched-chain amino acids (BCAA). Catalyzes an alkyl-migration followed by a ketol-acid reduction of (S)-2-acetolactate (S2AL) to yield (R)-2,3-dihydroxy-isovalerate. In the isomerase reaction, S2AL is rearranged via a Mg-dependent methyl migration to produce 3-hydroxy-3-methyl-2-ketobutyrate (HMKB). In the reductase reaction, this 2-ketoacid undergoes a metal-dependent reduction by NADPH to yield (R)-2,3-dihydroxy-isovalerate. This is Ketol-acid reductoisomerase (NADP(+)) from Acidobacterium capsulatum (strain ATCC 51196 / DSM 11244 / BCRC 80197 / JCM 7670 / NBRC 15755 / NCIMB 13165 / 161).